Consider the following 258-residue polypeptide: Glutamate racemase (258 aa).

Substrate-binding positions include 11–12 and 43–44; these read DS and YG. Cysteine 74 functions as the Proton donor/acceptor in the catalytic mechanism. 75–76 is a substrate binding site; that stretch reads NT. The active-site Proton donor/acceptor is cysteine 187. Residue 188–189 coordinates substrate; the sequence is TH.

The protein belongs to the aspartate/glutamate racemases family.

The catalysed reaction is L-glutamate = D-glutamate. It participates in cell wall biogenesis; peptidoglycan biosynthesis. Its function is as follows. Provides the (R)-glutamate required for cell wall biosynthesis. The polypeptide is Glutamate racemase (Bifidobacterium adolescentis (strain ATCC 15703 / DSM 20083 / NCTC 11814 / E194a)).